Reading from the N-terminus, the 137-residue chain is Large ribosomal subunit protein uL16 (137 aa).

This sequence belongs to the universal ribosomal protein uL16 family. Part of the 50S ribosomal subunit.

Binds 23S rRNA and is also seen to make contacts with the A and possibly P site tRNAs. In Alcanivorax borkumensis (strain ATCC 700651 / DSM 11573 / NCIMB 13689 / SK2), this protein is Large ribosomal subunit protein uL16.